Here is a 91-residue protein sequence, read N- to C-terminus: MHNIPPEESLIEYPSDFPIKVMGKQHPEFAQTLTEVVLQFDPGFDPASVEMRPSKGGNYLGLTFTVRATSREQLDSLYRALHGHPMVSIVL.

It belongs to the UPF0250 family.

The sequence is that of UPF0250 protein BP0104 from Bordetella pertussis (strain Tohama I / ATCC BAA-589 / NCTC 13251).